Reading from the N-terminus, the 268-residue chain is Deoxyuridine 5'-triphosphate nucleotidohydrolase (268 aa).

Substrate is bound by residues 172-174 (RSS) and 263-264 (FG).

It belongs to the dUTPase family. Mg(2+) is required as a cofactor.

The catalysed reaction is dUTP + H2O = dUMP + diphosphate + H(+). Involved in nucleotide metabolism: produces dUMP, the immediate precursor of thymidine nucleotides and decreases the intracellular concentration of dUTP to avoid uracil incorporation into viral DNA. This chain is Deoxyuridine 5'-triphosphate nucleotidohydrolase, found in Suid herpesvirus 1 (strain Kaplan) (SuHV-1).